The following is a 123-amino-acid chain: UPF0102 protein Psyr_4114 (123 aa).

This sequence belongs to the UPF0102 family.

The polypeptide is UPF0102 protein Psyr_4114 (Pseudomonas syringae pv. syringae (strain B728a)).